Here is a 317-residue protein sequence, read N- to C-terminus: Methionyl-tRNA formyltransferase (317 aa).

117–120 (SLLP) contributes to the (6S)-5,6,7,8-tetrahydrofolate binding site.

This sequence belongs to the Fmt family.

It carries out the reaction L-methionyl-tRNA(fMet) + (6R)-10-formyltetrahydrofolate = N-formyl-L-methionyl-tRNA(fMet) + (6S)-5,6,7,8-tetrahydrofolate + H(+). Attaches a formyl group to the free amino group of methionyl-tRNA(fMet). The formyl group appears to play a dual role in the initiator identity of N-formylmethionyl-tRNA by promoting its recognition by IF2 and preventing the misappropriation of this tRNA by the elongation apparatus. This is Methionyl-tRNA formyltransferase from Herminiimonas arsenicoxydans.